We begin with the raw amino-acid sequence, 98 residues long: Prolactin-releasing peptide (98 aa).

The N-terminal stretch at 1–22 (MKAVGAWLLCLLLLGLALQGAA) is a signal peptide. Disordered stretches follow at residues 52–71 (RFGRRRAAPGDGPRPGPRRV) and 79–98 (GGAEPSRALPGRLTAQLVQE). At Phe53 the chain carries Phenylalanine amide. Positions 58 to 98 (AAPGDGPRPGPRRVPACFRLEGGAEPSRALPGRLTAQLVQE) are excised as a propeptide.

In terms of processing, amidation of C-terminus is required for receptor interaction. Medulla oblongata and hypothalamus.

It is found in the secreted. Its function is as follows. Stimulates prolactin (PRL) release and regulates the expression of prolactin through its receptor GPR10. May stimulate lactotrophs directly to secrete PRL. The protein is Prolactin-releasing peptide (PRLH) of Bos taurus (Bovine).